The primary structure comprises 323 residues: Galectin-4 (323 aa).

Galectin domains follow at residues 19 to 150 (YYKP…INFI) and 194 to 323 (YKTR…YVQI). Position 256–262 (256–262 (WGAEERK)) interacts with a beta-D-galactoside.

Monomer.

In terms of biological role, galectin that binds lactose and a related range of sugars. May be involved in the assembly of adherens junctions. The polypeptide is Galectin-4 (LGALS4) (Sus scrofa (Pig)).